The sequence spans 810 residues: DNA gyrase subunit A (810 aa).

A Topo IIA-type catalytic domain is found at 36–502 (LPDVRDGLKP…EVLKTSMSDL (467 aa)). Y124 acts as the O-(5'-phospho-DNA)-tyrosine intermediate in catalysis. The short motif at 529–535 (QGIGGKG) is the GyrA-box element.

The protein belongs to the type II topoisomerase GyrA/ParC subunit family. Heterotetramer, composed of two GyrA and two GyrB chains. In the heterotetramer, GyrA contains the active site tyrosine that forms a transient covalent intermediate with DNA, while GyrB binds cofactors and catalyzes ATP hydrolysis.

It is found in the cytoplasm. It carries out the reaction ATP-dependent breakage, passage and rejoining of double-stranded DNA.. In terms of biological role, a type II topoisomerase that negatively supercoils closed circular double-stranded (ds) DNA in an ATP-dependent manner to modulate DNA topology and maintain chromosomes in an underwound state. Negative supercoiling favors strand separation, and DNA replication, transcription, recombination and repair, all of which involve strand separation. Also able to catalyze the interconversion of other topological isomers of dsDNA rings, including catenanes and knotted rings. Type II topoisomerases break and join 2 DNA strands simultaneously in an ATP-dependent manner. The protein is DNA gyrase subunit A of Borrelia hermsii (strain HS1 / DAH).